A 246-amino-acid chain; its full sequence is UDP-N-acetyl-D-mannosaminuronic acid transferase (246 aa).

The protein belongs to the glycosyltransferase 26 family.

It carries out the reaction UDP-N-acetyl-alpha-D-mannosaminouronate + N-acetyl-alpha-D-glucosaminyl-di-trans,octa-cis-undecaprenyl diphosphate = beta-D-ManNAcA-(1-&gt;4)-alpha-D-GlcNAc-di-trans,octa-cis-undecaprenyl diphosphate + UDP + H(+). Its pathway is bacterial outer membrane biogenesis; enterobacterial common antigen biosynthesis. In terms of biological role, catalyzes the synthesis of Und-PP-GlcNAc-ManNAcA (Lipid II), the second lipid-linked intermediate involved in enterobacterial common antigen (ECA) synthesis. The sequence is that of UDP-N-acetyl-D-mannosaminuronic acid transferase from Escherichia coli O1:K1 / APEC.